A 78-amino-acid chain; its full sequence is Small ribosomal subunit protein uS17 (78 aa).

It belongs to the universal ribosomal protein uS17 family. In terms of assembly, part of the 30S ribosomal subunit.

Functionally, one of the primary rRNA binding proteins, it binds specifically to the 5'-end of 16S ribosomal RNA. The protein is Small ribosomal subunit protein uS17 of Wolbachia pipientis wMel.